A 78-amino-acid polypeptide reads, in one-letter code: Large ribosomal subunit protein bL28 (78 aa).

This sequence belongs to the bacterial ribosomal protein bL28 family.

This chain is Large ribosomal subunit protein bL28, found in Edwardsiella ictaluri (strain 93-146).